The primary structure comprises 351 residues: Transmembrane protein 115 (351 aa).

The Cytoplasmic segment spans residues 1–19 (MQRALPGARQHLGAILSSA). The segment at 1–205 (MQRALPGARQ…FGLISSWVYL (205 aa)) is mediates homooligomerization. A helical membrane pass occupies residues 20 to 40 (SVVVKALCAAVLFLYLLSFAV). Residues 41–97 (DTGCLAVTPGYLFPPNFWIWTLATHGLMEQHVWDVAISLATVVVAGRLLEPLWGALE) are Lumenal-facing. Residues 98–118 (LLIFFSVVNVSVGLLGAFAYL) traverse the membrane as a helical segment. At 119-126 (LTYMASFN) the chain is on the cytoplasmic side. Residues 127–147 (LVYLFTVRIHGALGFLGGVLV) form a helical membrane-spanning segment. Over 148–165 (ALKQTMGDCVVLRVPQVR) the chain is Lumenal. The helical transmembrane segment at 166–186 (VSVVPMLLLGLLLLLRLATLL) threads the bilayer. Topologically, residues 187–351 (QSPALASYGF…ITFEAAPPTL (165 aa)) are cytoplasmic. The interval 206–229 (RFYQRHSRGRGDMADHFAFATFFP) is mediates localization to the Golgi. The interval 300 to 351 (DQSVWPSMDDDEEEAGAKVDSPMPSDKAPTLPGKGAVPESSLITFEAAPPTL) is disordered. Thr-329 carries the phosphothreonine modification.

This sequence belongs to the TMEM115 family. As to quaternary structure, homooligomer. Interacts with COPB1. May interact with LMAN1. Interacts with the COG complex; probably through COG3.

The protein resides in the golgi apparatus. It is found in the golgi stack membrane. May play a role in retrograde transport of proteins from the Golgi to the endoplasmic reticulum. May indirectly play a role in protein glycosylation in the Golgi. The polypeptide is Transmembrane protein 115 (Bos taurus (Bovine)).